Reading from the N-terminus, the 455-residue chain is Transcriptional regulatory protein FlbD (455 aa).

The Response regulatory domain occupies 2-114; sequence RLLVVGKLNG…LIAAVLAAVT (113 aa). The Sigma-54 factor interaction domain occupies 120–349; the sequence is MVVRDPAMEQ…LENAMHRAVL (230 aa). Residues 148–155 and 211–220 each bind ATP; these read GESGSGKE and ADGGTLLLDE. The segment at residues 416–435 is a DNA-binding region (H-T-H motif); the sequence is RTHAANILGISIRTLRNKLK.

It is found in the cytoplasm. In terms of biological role, activation of sigma-54-dependent flagellar gene promoters and strong negative autoregulatory effects on its own promoter. The synthesis and function of FlbD in C.crescentus is controlled by an internal cell-cycle clock. This Caulobacter vibrioides (strain ATCC 19089 / CIP 103742 / CB 15) (Caulobacter crescentus) protein is Transcriptional regulatory protein FlbD (flbD).